Here is a 642-residue protein sequence, read N- to C-terminus: Cylicin-1 (642 aa).

Disordered stretches follow at residues 167 to 203 and 284 to 607; these read NGEP…NLEY and NCSQ…CEPF. Residues 191-203 are compositionally biased toward polar residues; the sequence is KTSNSTSETNLEY. 8 tandem repeats follow at residues 294–313, 314–344, 345–391, 392–432, 433–464, 465–500, 501–526, and 527–543. The segment covering 298–316 has biased composition (basic and acidic residues); it reads GKKERDSDIDSGGSKDAKK. The span at 317–330 shows a compositional bias: basic residues; it reads EGKKKGKRESRKKR. Residues 353 to 364 show a composition bias toward basic and acidic residues; it reads KKNEIKKKKDTD. The segment covering 388 to 404 has biased composition (low complexity); that stretch reads KKSTGSTGSESVDSKST. Over residues 405–416 the composition is skewed to basic residues; the sequence is NKVKKQVKKGVM. The segment covering 428 to 440 has biased composition (basic and acidic residues); the sequence is ASSKKSKKDEKKE. Residues 454-463 are compositionally biased toward acidic residues; it reads STDADSESEG. Positions 465 to 488 are enriched in basic and acidic residues; sequence STGKKNEKKDKKITKKGEKKDAKK. Low complexity predominate over residues 513–523; the sequence is SFSDSTSDSYS. Positions 527–543 are 8 X approximate tandem repeats; sequence RRKNVRRSDSESEDSSG.

Interacts with proteins of spermatozoa head including ACTL7A, CCIN, FAM209 and SPACA1; the interactions may be necessary for proper acrosome attachment to the nuclear envelope. In terms of tissue distribution, testis.

Its subcellular location is the cytoplasm. The protein resides in the cytoskeleton. It localises to the perinuclear theca. It is found in the calyx. Plays a role in the establishment of normal sperm morphology during spermatogenesis and is required for acrosome attachment to the nuclear envelope. The chain is Cylicin-1 from Mus musculus (Mouse).